Here is a 201-residue protein sequence, read N- to C-terminus: Large ribosomal subunit protein uL4 (201 aa).

Residues 44 to 71 form a disordered region; that stretch reads RAQKTRAEVSGSGKKPWRQKGTGRARSG.

This sequence belongs to the universal ribosomal protein uL4 family. As to quaternary structure, part of the 50S ribosomal subunit.

Its function is as follows. One of the primary rRNA binding proteins, this protein initially binds near the 5'-end of the 23S rRNA. It is important during the early stages of 50S assembly. It makes multiple contacts with different domains of the 23S rRNA in the assembled 50S subunit and ribosome. Functionally, forms part of the polypeptide exit tunnel. In Proteus mirabilis (strain HI4320), this protein is Large ribosomal subunit protein uL4.